The chain runs to 216 residues: Thiopurine S-methyltransferase (216 aa).

Trp11, Leu46, Glu67, and Arg122 together coordinate S-adenosyl-L-methionine.

It belongs to the class I-like SAM-binding methyltransferase superfamily. TPMT family.

The protein resides in the cytoplasm. The catalysed reaction is S-adenosyl-L-methionine + a thiopurine = S-adenosyl-L-homocysteine + a thiopurine S-methylether.. The sequence is that of Thiopurine S-methyltransferase from Vibrio parahaemolyticus serotype O3:K6 (strain RIMD 2210633).